A 180-amino-acid polypeptide reads, in one-letter code: Pro-glucagon (180 aa).

Residues 1–20 (MKTIYFVAGLLIMLVQGSWQ) form the signal peptide. The interval 25–58 (DTEENPRSFPASQTEAHEDPDEMNEDKRHSQGTF) is disordered. A Phosphoserine modification is found at Ser-54. The propeptide occupies 84–89 (NRNNIA). Phosphoserine is present on residues Ser-105 and Ser-108. Arg-127 carries the post-translational modification Arginine amide. Positions 131–145 (DFPEEVAIAEELGRR) are excised as a propeptide. A phosphoserine mark is found at Ser-150 and Ser-152.

This sequence belongs to the glucagon family. In terms of processing, proglucagon is post-translationally processed in a tissue-specific manner in pancreatic A cells and intestinal L cells. In pancreatic A cells, the major bioactive hormone is glucagon cleaved by PCSK2/PC2. In the intestinal L cells PCSK1/PC1 liberates GLP-1, GLP-2, glicentin and oxyntomodulin. GLP-1 is further N-terminally truncated by post-translational processing in the intestinal L cells resulting in GLP-1(7-37) GLP-1-(7-36)amide. The C-terminal amidation is neither important for the metabolism of GLP-1 nor for its effects on the endocrine pancreas. In terms of tissue distribution, secreted in the A cells of the islets of Langerhans. As to expression, secreted in the A cells of the islets of Langerhans. Secreted from enteroendocrine L cells throughout the gastrointestinal tract. Also secreted in selected neurons in the brain. Secreted from enteroendocrine cells throughout the gastrointestinal tract. Also secreted in selected neurons in the brain. In terms of tissue distribution, secreted from enteroendocrine cells throughout the gastrointestinal tract.

It is found in the secreted. Plays a key role in glucose metabolism and homeostasis. Regulates blood glucose by increasing gluconeogenesis and decreasing glycolysis. A counterregulatory hormone of insulin, raises plasma glucose levels in response to insulin-induced hypoglycemia. Plays an important role in initiating and maintaining hyperglycemic conditions in diabetes. Its function is as follows. Potent stimulator of glucose-dependent insulin release. Also stimulates insulin release in response to IL6. Plays important roles on gastric motility and the suppression of plasma glucagon levels. May be involved in the suppression of satiety and stimulation of glucose disposal in peripheral tissues, independent of the actions of insulin. Has growth-promoting activities on intestinal epithelium. May also regulate the hypothalamic pituitary axis (HPA) via effects on LH, TSH, CRH, oxytocin, and vasopressin secretion. Increases islet mass through stimulation of islet neogenesis and pancreatic beta cell proliferation. Inhibits beta cell apoptosis. Functionally, stimulates intestinal growth and up-regulates villus height in the small intestine, concomitant with increased crypt cell proliferation and decreased enterocyte apoptosis. The gastrointestinal tract, from the stomach to the colon is the principal target for GLP-2 action. Plays a key role in nutrient homeostasis, enhancing nutrient assimilation through enhanced gastrointestinal function, as well as increasing nutrient disposal. Stimulates intestinal glucose transport and decreases mucosal permeability. In terms of biological role, significantly reduces food intake. Inhibits gastric emptying in humans. Suppression of gastric emptying may lead to increased gastric distension, which may contribute to satiety by causing a sensation of fullness. May modulate gastric acid secretion and the gastro-pyloro-duodenal activity. May play an important role in intestinal mucosal growth in the early period of life. The protein is Pro-glucagon (Gcg) of Mus musculus (Mouse).